Here is a 51-residue protein sequence, read N- to C-terminus: Protein YrhD (51 aa).

The polypeptide is Protein YrhD (yrhD) (Escherichia coli (strain K12)).